A 538-amino-acid polypeptide reads, in one-letter code: Syncytin-2 (538 aa).

Residues Met-1–Ala-15 form the signal peptide. The Extracellular portion of the chain corresponds to Ala-16–Lys-478. A CXXC motif is present at residues Cys-43–Cys-46. 3 disulfide bridges follow: Cys-43–Cys-46, Cys-43–Cys-439, and Cys-431–Cys-438. 8 N-linked (GlcNAc...) asparagine glycosylation sites follow: Asn-133, Asn-146, Asn-177, Asn-220, Asn-241, Asn-247, Asn-312, and Asn-332. The interval Phe-354–Ile-374 is fusion peptide. Residues Leu-414–Ile-430 carry the CKS-17 motif. Positions Cys-431–Cys-439 match the CX6CC motif. A glycan (N-linked (GlcNAc...) asparagine) is linked at Asn-443. Residues Trp-479–Phe-499 form a helical membrane-spanning segment. Over Gly-500–Phe-538 the chain is Cytoplasmic.

Belongs to the gamma type-C retroviral envelope protein family. HERV class-I FRD env subfamily. As to quaternary structure, the surface and transmembrane proteins form a heterodimer. They are attached by non-covalent interactions or by a labile interchain disulfide bond. In terms of processing, specific enzymatic cleavages in vivo yield the mature SU and TM proteins. Post-translationally, the CXXC motif is highly conserved across a broad range of retroviral envelope proteins. It is thought to participate in the formation of a labile disulfide bond possibly with the CX6CC motif present in the transmembrane protein.

The protein resides in the virion. Its subcellular location is the cell membrane. Its function is as follows. This endogenous retroviral envelope protein has retained its original fusogenic properties and participates in trophoblast fusion and the formation of a syncytium during placenta morphogenesis. The interaction with MFSD2A is apparently important for this process. In terms of biological role, endogenous envelope proteins may have kept, lost or modified their original function during evolution but this one can still make pseudotypes with MLV, HIV-1 or SIV-1 virions and confer infectivity. Retroviral envelope proteins mediate receptor recognition and membrane fusion during early infection. The surface protein mediates receptor recognition, while the transmembrane protein anchors the envelope heterodimer to the viral membrane through one transmembrane domain. The other hydrophobic domain, called fusion peptide, mediates fusion of the viral membrane with the target cell membrane. The polypeptide is Syncytin-2 (ERVFRD-1) (Gorilla gorilla gorilla (Western lowland gorilla)).